Here is a 345-residue protein sequence, read N- to C-terminus: UPF0284 protein STK_21430 (345 aa).

It belongs to the UPF0284 family.

This is UPF0284 protein STK_21430 from Sulfurisphaera tokodaii (strain DSM 16993 / JCM 10545 / NBRC 100140 / 7) (Sulfolobus tokodaii).